The sequence spans 335 residues: Protein-arginine kinase (335 aa).

Positions 21 to 244 (VIISSRIRLA…NQIINEEKQI (224 aa)) constitute a Phosphagen kinase C-terminal domain. ATP-binding positions include 24–28 (SSRIR), histidine 82, arginine 115, 166–170 (RASVM), and 197–202 (RGIYGE).

Belongs to the ATP:guanido phosphotransferase family.

It catalyses the reaction L-arginyl-[protein] + ATP = N(omega)-phospho-L-arginyl-[protein] + ADP + H(+). Functionally, catalyzes the specific phosphorylation of arginine residues in proteins. This is Protein-arginine kinase from Staphylococcus epidermidis (strain ATCC 12228 / FDA PCI 1200).